The following is a 137-amino-acid chain: Peptide methionine sulfoxide reductase MsrB (137 aa).

Residues 7–129 form the MsrB domain; that stretch reads PDHPATELNE…NSASLSFTDG (123 aa). Zn(2+) contacts are provided by C46, C49, C95, and C98. C118 (nucleophile) is an active-site residue.

It belongs to the MsrB Met sulfoxide reductase family. Zn(2+) is required as a cofactor.

The catalysed reaction is L-methionyl-[protein] + [thioredoxin]-disulfide + H2O = L-methionyl-(R)-S-oxide-[protein] + [thioredoxin]-dithiol. This chain is Peptide methionine sulfoxide reductase MsrB, found in Serratia proteamaculans (strain 568).